The sequence spans 327 residues: Tetraacyldisaccharide 4'-kinase (327 aa).

Residue 52 to 59 (TLGGAGKT) participates in ATP binding.

This sequence belongs to the LpxK family.

The enzyme catalyses a lipid A disaccharide + ATP = a lipid IVA + ADP + H(+). It functions in the pathway glycolipid biosynthesis; lipid IV(A) biosynthesis; lipid IV(A) from (3R)-3-hydroxytetradecanoyl-[acyl-carrier-protein] and UDP-N-acetyl-alpha-D-glucosamine: step 6/6. Transfers the gamma-phosphate of ATP to the 4'-position of a tetraacyldisaccharide 1-phosphate intermediate (termed DS-1-P) to form tetraacyldisaccharide 1,4'-bis-phosphate (lipid IVA). In Methylorubrum extorquens (strain CM4 / NCIMB 13688) (Methylobacterium extorquens), this protein is Tetraacyldisaccharide 4'-kinase.